A 280-amino-acid chain; its full sequence is Large ribosomal subunit protein uL2 (280 aa).

Disordered regions lie at residues 1–58 (MAIR…GGGH) and 226–280 (MNPV…KHGR). 2 stretches are compositionally biased toward basic residues: residues 37–58 (LHGHGGRNAHGRITTRHKGGGH) and 268–280 (IVRRRRTGKKHGR).

The protein belongs to the universal ribosomal protein uL2 family. Part of the 50S ribosomal subunit. Forms a bridge to the 30S subunit in the 70S ribosome.

Functionally, one of the primary rRNA binding proteins. Required for association of the 30S and 50S subunits to form the 70S ribosome, for tRNA binding and peptide bond formation. It has been suggested to have peptidyltransferase activity; this is somewhat controversial. Makes several contacts with the 16S rRNA in the 70S ribosome. The protein is Large ribosomal subunit protein uL2 of Mycolicibacterium paratuberculosis (strain ATCC BAA-968 / K-10) (Mycobacterium paratuberculosis).